A 1531-amino-acid chain; its full sequence is Probable outer membrane protein PmpD (1531 aa).

Residues 1 to 20 form the signal peptide; sequence MSSEKDIKSTCSKFSLSVVA. Residues 1244–1531 form the Autotransporter domain; it reads EFDYSTNVWG…EANTGLRLIF (288 aa).

Belongs to the PMP outer membrane protein family.

The protein localises to the secreted. It localises to the cell wall. It is found in the cell outer membrane. The sequence is that of Probable outer membrane protein PmpD (pmpD) from Chlamydia trachomatis serovar D (strain ATCC VR-885 / DSM 19411 / UW-3/Cx).